A 215-amino-acid chain; its full sequence is Ras-related protein Rab-5A (215 aa).

Residues S29, A30, G32, K33, S34, S35, H46, E47, T52, and G78 each coordinate GTP. Residue S34 participates in Mg(2+) binding. Short sequence motifs (switch) lie at residues 44 to 56 and 77 to 93; these read QFHE…IGAA and AGQE…YRGA. T52 serves as a coordination point for Mg(2+). S84 bears the Phosphoserine mark. The GTP site is built by N133, K134, D136, A164, and K165. The segment at 185-215 is disordered; the sequence is EPQNPGINCTRGRGVDLTEPTQPTRSQCCSN. Polar residues predominate over residues 203 to 215; sequence EPTQPTRSQCCSN. Residues C212 and C213 are each lipidated (S-geranylgeranyl cysteine).

This sequence belongs to the small GTPase superfamily. Rab family. Interacts with GDI1; this promotes dissociation from membranes; phosphorylation at Ser-84 disrupts this interaction. Interacts with GDI2; phosphorylation at Ser-84 disrupts the interaction. Interacts with SGSM1 and SGSM3. Interacts with PIK3CB. Interacts with RIN1 and GAPVD1, which regulate its pathway, probably by acting as a GEF. Interacts with RINL. Interacts with ALS2CL, SUN2, ZFYVE20 and RUFY1. Interacts with RABEP1; one RABEP1 homodimer binds two RAB5A chains, but at opposite sides of the dimer. Interacts with OCRL and INPP5F. May be a component of a complex composed of RAB5A, DYN2 and PIK3C3. Does not interact with the BLOC-3 complex (heterodimer of HPS1 and HPS4). Interacts with CLN5. Interacts with APPL2. Interacts with F8A1/F8A2/F8A3. Found in a complex with F8A1/F8A2/F8A3, HTT and RAB5A; mediates the recruitment of HTT by RAB5A onto early endosomes. Interacts with ATP9A. Interacts with PPP1R21; mediates the recruitment of FERRY complex by RAB5A onto early endosomes. Requires Mg(2+) as cofactor. Phosphorylation of Ser-84 in the switch II region by LRRK2 prevents the association of RAB regulatory proteins, including RAB GDP dissociation inhibitors GDI1 and GDI2.

It localises to the cell membrane. Its subcellular location is the early endosome membrane. It is found in the melanosome. The protein resides in the cytoplasmic vesicle. The protein localises to the cell projection. It localises to the ruffle. Its subcellular location is the membrane. It is found in the cytoplasm. The protein resides in the cytosol. The protein localises to the phagosome membrane. It localises to the endosome membrane. The enzyme catalyses GTP + H2O = GDP + phosphate + H(+). Its activity is regulated as follows. Regulated by guanine nucleotide exchange factors (GEFs) including RINL, which promote the exchange of bound GDP for free GTP. Regulated by GTPase activating proteins (GAPs) which increase the GTP hydrolysis activity. Inhibited by GDP dissociation inhibitors (GDIs). In terms of biological role, the small GTPases Rab are key regulators of intracellular membrane trafficking, from the formation of transport vesicles to their fusion with membranes. Rabs cycle between an inactive GDP-bound form and an active GTP-bound form that is able to recruit to membranes different sets of downstream effectors directly responsible for vesicle formation, movement, tethering and fusion. RAB5A is required for the fusion of plasma membranes and early endosomes. Contributes to the regulation of filopodia extension. Required for the exosomal release of SDCBP, CD63, PDCD6IP and syndecan. Regulates maturation of apoptotic cell-containing phagosomes, probably downstream of DYN2 and PIK3C3. This chain is Ras-related protein Rab-5A (RAB5A), found in Sus scrofa (Pig).